Consider the following 173-residue polypeptide: Propanediol dehydratase small subunit (173 aa).

This sequence belongs to the diol/glycerol dehydratase small subunit family. The propanediol dehydratase enzyme is a heterotrimeric complex composed of a large (PduC), a medium (PduD) and a small (PduE) subunit. Requires adenosylcob(III)alamin as cofactor.

It is found in the bacterial microcompartment. The catalysed reaction is propane-1,2-diol = propanal + H2O. The protein operates within polyol metabolism; 1,2-propanediol degradation. Its activity is regulated as follows. Inhibited by glycerol. Functionally, part of the PduCDE complex that catalyzes the dehydration of 1,2-propanediol (1,2-PD) to propionaldehyde. Required for S.typhimurium growth on 1,2-PD as the sole carbon and energy source. Localized in the bacterial microcompartment (BMC) dedicated to 1,2-PD degradation. In terms of biological role, the 1,2-PD-specific bacterial microcompartment (BMC) concentrates low levels of 1,2-PD catabolic enzymes, concentrates volatile reaction intermediates thus enhancing pathway flux and keeps the level of toxic, mutagenic propionaldehyde low. This Salmonella typhimurium (strain LT2 / SGSC1412 / ATCC 700720) protein is Propanediol dehydratase small subunit.